A 227-amino-acid chain; its full sequence is Arginine ABC transporter permease protein ArtM (227 aa).

In terms of domain architecture, ABC transmembrane type-1 spans 13–209 (IPTSLLLTVV…IITGIATLLL (197 aa)). A run of 5 helical transmembrane segments spans residues 17–37 (LLLT…LTFL), 51–71 (LYLT…IYAG), 78–98 (IIDS…ALAL), 155–175 (IILV…DIMG), and 188–208 (LTIY…ATLL).

The protein belongs to the binding-protein-dependent transport system permease family. HisMQ subfamily. The complex is composed of two ATP-binding proteins (ArtP), two transmembrane proteins (ArtM and ArtQ) and a solute-binding protein (ArtI).

The protein resides in the cell inner membrane. Functionally, part of the ABC transporter complex ArtPIQM involved in arginine transport. Probably responsible for the translocation of the substrate across the membrane. The sequence is that of Arginine ABC transporter permease protein ArtM (artM) from Haemophilus influenzae (strain ATCC 51907 / DSM 11121 / KW20 / Rd).